A 413-amino-acid chain; its full sequence is Multifunctional CCA protein (413 aa).

ATP-binding residues include glycine 8 and arginine 11. CTP contacts are provided by glycine 8 and arginine 11. Residues aspartate 21 and aspartate 23 each coordinate Mg(2+). Residues arginine 91, arginine 143, and arginine 146 each contribute to the ATP site. The CTP site is built by arginine 91, arginine 143, and arginine 146. The 102-residue stretch at 232–333 folds into the HD domain; the sequence is TGVHVMMVVD…VRLFERSDAL (102 aa).

It belongs to the tRNA nucleotidyltransferase/poly(A) polymerase family. Bacterial CCA-adding enzyme type 1 subfamily. Monomer. Can also form homodimers and oligomers. Mg(2+) serves as cofactor. Ni(2+) is required as a cofactor.

The catalysed reaction is a tRNA precursor + 2 CTP + ATP = a tRNA with a 3' CCA end + 3 diphosphate. It catalyses the reaction a tRNA with a 3' CCA end + 2 CTP + ATP = a tRNA with a 3' CCACCA end + 3 diphosphate. Functionally, catalyzes the addition and repair of the essential 3'-terminal CCA sequence in tRNAs without using a nucleic acid template. Adds these three nucleotides in the order of C, C, and A to the tRNA nucleotide-73, using CTP and ATP as substrates and producing inorganic pyrophosphate. tRNA 3'-terminal CCA addition is required both for tRNA processing and repair. Also involved in tRNA surveillance by mediating tandem CCA addition to generate a CCACCA at the 3' terminus of unstable tRNAs. While stable tRNAs receive only 3'-terminal CCA, unstable tRNAs are marked with CCACCA and rapidly degraded. The protein is Multifunctional CCA protein of Burkholderia lata (strain ATCC 17760 / DSM 23089 / LMG 22485 / NCIMB 9086 / R18194 / 383).